The sequence spans 153 residues: UPF0260 protein YcgN (153 aa).

The protein belongs to the UPF0260 family.

This Salmonella paratyphi B (strain ATCC BAA-1250 / SPB7) protein is UPF0260 protein YcgN.